We begin with the raw amino-acid sequence, 551 residues long: MATLALSWCLPLLILLLPLATSSASAAVNGTSRFTCFYNSRANISCVWSQDGALQDTSCQVHAWPDRRRWNQTCELLPVSQASWACNLILGTPDSQKLTAVDIVTLRVMCREGVRWRMMAIQDFKPFENLRLMAPISLQVVHVETHRCNISWKISQASHYFERHLEFEARTLSPGHTWEEAPLMTLKQKQEWICLETLTPDTQYEFQVRVKPLQGEFTTWSPWSQPLAFRTKPAALGKDTIPWLGHLLVGLSGAFGFIILVYLLINCRNTGPWLKKVLKCHTPDPSKFFSQLTSEHGGDVQKWLSSPFPSSSFSPGGLAPEISPLEVLERDKVTQLLLQQDKVPEPSSLSSNRSLTSCFTNQGYFFFHLPDALEIEACQVYFTYDPCAEEEPDEGGADAPTGSSPQPLRPLSAEDDAYCTFPSGDDLLLFSPSLLGGPSPPSTAPGGSGAGEERLPPSLQERVPRDWDPQPLGPPTPGVPDLVDFQPRPELVLREAGEQVPDPGPREPFSFPWARPPGQGEVRALNARLPLNTDAYLSLQELQDQDPTHLV.

The first 26 residues, 1–26, serve as a signal peptide directing secretion; sequence MATLALSWCLPLLILLLPLATSSASA. Over 27 to 240 the chain is Extracellular; that stretch reads AVNGTSRFTC…TKPAALGKDT (214 aa). N-linked (GlcNAc...) asparagine glycosylation is found at asparagine 29, asparagine 43, and asparagine 71. The cysteines at positions 36 and 46 are disulfide-linked. An intrachain disulfide couples cysteine 74 to cysteine 86. Residues 134 to 234 form the Fibronectin type-III domain; it reads APISLQVVHV…QPLAFRTKPA (101 aa). Residue asparagine 149 is glycosylated (N-linked (GlcNAc...) asparagine). A WSXWS motif motif is present at residues 220–224; it reads WSPWS. The helical transmembrane segment at 241–265 threads the bilayer; the sequence is IPWLGHLLVGLSGAFGFIILVYLLI. Topologically, residues 266 to 551 are cytoplasmic; the sequence is NCRNTGPWLK…LQDQDPTHLV (286 aa). The Box 1 motif motif lies at 278–286; sequence LKCHTPDPS. Disordered regions lie at residues 389 to 417, 430 to 484, and 496 to 517; these read EEEPDEGGADAPTGSSPQPLRPLSAEDDA, FSPS…DLVD, and AGEQVPDPGPREPFSFPWARPP.

This sequence belongs to the type I cytokine receptor family. Type 4 subfamily. As to quaternary structure, non-covalent dimer of an alpha and a beta subunit. IL2R exists in 3 different forms: a high affinity dimer, an intermediate affinity monomer (beta subunit), and a low affinity monomer (alpha subunit). The high and intermediate affinity forms also associate with a gamma subunit. Interacts with SHB upon interleukin stimulation.

It is found in the cell membrane. The protein localises to the cell surface. In terms of biological role, receptor for interleukin-2. This beta subunit is involved in receptor mediated endocytosis and transduces the mitogenic signals of IL2. Probably in association with IL15RA, involved in the stimulation of neutrophil phagocytosis by IL15. In Macaca fascicularis (Crab-eating macaque), this protein is Interleukin-2 receptor subunit beta (IL2RB).